Here is a 611-residue protein sequence, read N- to C-terminus: Threonine--tRNA ligase (611 aa).

Positions 1-145 are editing domain; the sequence is MRLLLIHSDH…TILPGEGAAA (145 aa). Positions 195–487 are catalytic; sequence VHVDLMRAKE…TAAQEVPSFP (293 aa). Residues Cys287, His339, and His460 each coordinate Zn(2+).

Belongs to the class-II aminoacyl-tRNA synthetase family. Homodimer. Zn(2+) serves as cofactor.

Its subcellular location is the cytoplasm. It carries out the reaction tRNA(Thr) + L-threonine + ATP = L-threonyl-tRNA(Thr) + AMP + diphosphate + H(+). Functionally, catalyzes the attachment of threonine to tRNA(Thr) in a two-step reaction: L-threonine is first activated by ATP to form Thr-AMP and then transferred to the acceptor end of tRNA(Thr). Also edits incorrectly charged L-seryl-tRNA(Thr). This Methanoculleus marisnigri (strain ATCC 35101 / DSM 1498 / JR1) protein is Threonine--tRNA ligase.